A 135-amino-acid chain; its full sequence is Ribosome-binding factor A (135 aa).

This sequence belongs to the RbfA family. Monomer. Binds 30S ribosomal subunits, but not 50S ribosomal subunits or 70S ribosomes.

The protein resides in the cytoplasm. In terms of biological role, one of several proteins that assist in the late maturation steps of the functional core of the 30S ribosomal subunit. Associates with free 30S ribosomal subunits (but not with 30S subunits that are part of 70S ribosomes or polysomes). Required for efficient processing of 16S rRNA. May interact with the 5'-terminal helix region of 16S rRNA. This chain is Ribosome-binding factor A, found in Aliivibrio fischeri (strain ATCC 700601 / ES114) (Vibrio fischeri).